The sequence spans 535 residues: MEDIEGYEPHITQELIDRGHARRMGHLENYFAVLSRQKMYSNFTVYAELNKGVNKRQLMLVLKVLLQKYSTLAHTIIPKHYPHHEAYYSSEEYLSKPFPQHDFIKVISHLEFDDLIMNNQPEYREVMEKISEQFKKDDFKVTNRLIELISPVIIPLGNPKRPNWRLICLPGKDTDGFETWKNFVYVTNHCGSDGVSGSNFFKDLALLFCKIEEKGFDYDEEFIEDQVIIDYDRDYTEISKLPKPITDRIDYKPALTSLPKFFLTTFIYEHCNFKTSSESTLTARYSPSSNANASYNYLLHFSTKQVEQIRAQIKKNVHDGCTLTPFIQACFLVALYRLDKLFTKSLLEYGFDVAIPSNARRFLPNDEELRDSYKYGSNVGGSHYAYLISSFDIPEGDNDKFWSLVEYYYDRFLESYDNGDHLIGLGVLQLDFIVENKNIDSLLANSYLHQQRGGAIISNTGLVSQDTTKPYYVRDLIFSQSAGALRFAFGLNVCSTNVNGMNMDMSVVQGTLRDRGEWESFCKLFYQTIGEFASL.

A membrane association region spans residues 19 to 36 (GHARRMGHLENYFAVLSR). Residues His189 and Asp193 each act as charge relay system in the active site. A membrane association region spans residues 515-532 (RGEWESFCKLFYQTIGEF).

Belongs to the ATF1 alcohol acetyltransferase family.

The protein localises to the lipid droplet. The protein resides in the endoplasmic reticulum membrane. The catalysed reaction is an aliphatic alcohol + acetyl-CoA = an acetyl ester + CoA. Functionally, can use acetyl-CoA to synthesize acetate esters from various alcohols, producing ethyl acetate, isoamyl acetate, isobutyl acetate, butyl acetate, hexyl acetate, heptyl acetate and octyl acetate. ATF2 seems to play only a minor role in the acetate ester synthesis, compared to ATF1. Plays an active role in the detoxification hydroxysteroids and possibly certain phytochemicals, in association with the efflux pumps PDR5 and SNQ2. The polypeptide is Alcohol O-acetyltransferase 2 (Saccharomyces cerevisiae (strain ATCC 204508 / S288c) (Baker's yeast)).